We begin with the raw amino-acid sequence, 23 residues long: Septenin 2 (23 aa).

As to expression, expressed in skin glands.

Its subcellular location is the secreted. Functionally, may act as an antimicrobial peptide. The sequence is that of Septenin 2 from Osteopilus septentrionalis (Cuban treefrog).